The chain runs to 611 residues: Chaperone protein DnaK (611 aa).

Phosphothreonine; by autocatalysis is present on T173. Over residues 579–592 the composition is skewed to low complexity; that stretch reads AAGQAEGAQGAQDA. The interval 579–598 is disordered; sequence AAGQAEGAQGAQDAGAKKDN.

It belongs to the heat shock protein 70 family.

Acts as a chaperone. This is Chaperone protein DnaK from Bacillus cereus (strain ATCC 10987 / NRS 248).